The sequence spans 403 residues: Phosphoglycerate kinase (403 aa).

Substrate is bound by residues 21-23 (DFN), R36, 59-62 (HLGR), R119, and R159. ATP-binding positions include K214, G301, E332, and 359-362 (GGDS).

The protein belongs to the phosphoglycerate kinase family. In terms of assembly, monomer.

It localises to the cytoplasm. The catalysed reaction is (2R)-3-phosphoglycerate + ATP = (2R)-3-phospho-glyceroyl phosphate + ADP. The protein operates within carbohydrate degradation; glycolysis; pyruvate from D-glyceraldehyde 3-phosphate: step 2/5. The sequence is that of Phosphoglycerate kinase from Lactobacillus johnsonii (strain CNCM I-12250 / La1 / NCC 533).